A 157-amino-acid polypeptide reads, in one-letter code: Small ribosomal subunit protein uS7 (157 aa).

The protein belongs to the universal ribosomal protein uS7 family. Part of the 30S ribosomal subunit. Contacts proteins S9 and S11.

In terms of biological role, one of the primary rRNA binding proteins, it binds directly to 16S rRNA where it nucleates assembly of the head domain of the 30S subunit. Is located at the subunit interface close to the decoding center, probably blocks exit of the E-site tRNA. This chain is Small ribosomal subunit protein uS7, found in Caldicellulosiruptor saccharolyticus (strain ATCC 43494 / DSM 8903 / Tp8T 6331).